The chain runs to 282 residues: MLAQATTAGSFNHHASTVLQGCRGVPAAMWSEPAGAIRRHCATIDGMDCEVAREALSARLDGERAPVPSARVDEHLGECSACRAWFTQVASQAGDLRRLAESRPVVPPVGRLGIRRAPRRQHSPMTWRRWALLCVGIAQIALGTVQGFGLDVGLTHQHPTGAGTHLLNESTSWSIALGVIMVGAALWPSAAAGLAGVLTAFVAILTGYVIVDALSGAVSTTRILTHLPVVIGAVLAIMVWRSASGPRPRPDAVAAEPDIVLPDNASRGRRRGHLWPTDGSAA.

4 helical membrane passes run 130–150 (WALL…GFGL), 170–190 (STSW…WPSA), 191–211 (AAGL…YVIV), and 223–243 (ILTH…WRSA). The interval 263–282 (DNASRGRRRGHLWPTDGSAA) is disordered.

The protein resides in the cell membrane. This is an uncharacterized protein from Mycobacterium tuberculosis (strain CDC 1551 / Oshkosh).